A 280-amino-acid polypeptide reads, in one-letter code: Glycoprotein G (280 aa).

Positions Met1–Ala24 are cleaved as a signal peptide. Asn85 and Asn111 each carry an N-linked (GlcNAc...) asparagine; by host glycan. Residues Glu191 to Cys218 are disordered.

The protein belongs to the alphaherpesvirinae glycoprotein G family.

This chain is Glycoprotein G (gG), found in Psittacid herpesvirus 1 (isolate Amazon parrot/-/97-0001/1997) (PsHV-1).